Here is a 213-residue protein sequence, read N- to C-terminus: Large ribosomal subunit protein uL1 (213 aa).

The protein belongs to the universal ribosomal protein uL1 family. As to quaternary structure, part of the 50S ribosomal subunit.

Binds directly to 23S rRNA. Probably involved in E site tRNA release. Functionally, protein L1 is also a translational repressor protein, it controls the translation of its operon by binding to its mRNA. This chain is Large ribosomal subunit protein uL1, found in Picrophilus torridus (strain ATCC 700027 / DSM 9790 / JCM 10055 / NBRC 100828 / KAW 2/3).